The sequence spans 458 residues: MNKVNPKNTSPVAPKKVFIKTYGCQMNVYDSQRMTDSLSSQGYVTTQTPNDADLILVNTCHIREKAAEKLYSDLGRLRVMRQERTPDKPLTVGVTGCVAQAEGSEILRRAPIVDLVIGPQMYHRLPELLEKAKQGKKIIETDYAVEDKFAHLPPHNKRAVRKRGVSAFLTVQEGCDKFCTFCVVPYTRGAEISRSVEQITEEARQLIEAGVKEITLLGQNVNGWHGQSADGKTWRLGDLLYHLAKLDGLKRLRYTTSHPRDMDDSLIAAHRDLDMLMPYLHLPVQSGSDRILKAMNRQHKSSYYLHLIEKIRAARPDIAFSGDFIVGFPGETDEDFEETIKLIQQVQYSSAYSFKYSPRPGTVGATMKNHVDESVKDARLQHLQVLLLEQQNTFLRSKIGQKTDVLIEKPGRHSGQMVGRSPWLLPVVVDTESSTGSVVEIHIKNASSNSFVGEMTNR.

Positions 15–134 (KKVFIKTYGC…LPELLEKAKQ (120 aa)) constitute an MTTase N-terminal domain. [4Fe-4S] cluster-binding residues include Cys24, Cys60, Cys97, Cys175, Cys179, and Cys182. The 235-residue stretch at 161 to 395 (RKRGVSAFLT…LLLEQQNTFL (235 aa)) folds into the Radical SAM core domain. Residues 396–457 (RSKIGQKTDV…SNSFVGEMTN (62 aa)) form the TRAM domain.

This sequence belongs to the methylthiotransferase family. MiaB subfamily. Monomer. [4Fe-4S] cluster is required as a cofactor.

Its subcellular location is the cytoplasm. The enzyme catalyses N(6)-dimethylallyladenosine(37) in tRNA + (sulfur carrier)-SH + AH2 + 2 S-adenosyl-L-methionine = 2-methylsulfanyl-N(6)-dimethylallyladenosine(37) in tRNA + (sulfur carrier)-H + 5'-deoxyadenosine + L-methionine + A + S-adenosyl-L-homocysteine + 2 H(+). In terms of biological role, catalyzes the methylthiolation of N6-(dimethylallyl)adenosine (i(6)A), leading to the formation of 2-methylthio-N6-(dimethylallyl)adenosine (ms(2)i(6)A) at position 37 in tRNAs that read codons beginning with uridine. This is tRNA-2-methylthio-N(6)-dimethylallyladenosine synthase from Bartonella tribocorum (strain CIP 105476 / IBS 506).